The chain runs to 296 residues: uncharacterized protein (296 aa).

In terms of domain architecture, HTH lysR-type spans 1–60 (MDPKISYFQTFIVASKTKSFSKAAKRLGITQGTVSNHISALEKYFDAQLFLRTPEGVDLT). A DNA-binding region (H-T-H motif) is located at residues 20–39 (FSKAAKRLGITQGTVSNHIS).

This sequence belongs to the LysR transcriptional regulatory family.

This is an uncharacterized protein from Methanocaldococcus jannaschii (strain ATCC 43067 / DSM 2661 / JAL-1 / JCM 10045 / NBRC 100440) (Methanococcus jannaschii).